Consider the following 261-residue polypeptide: Kallikrein-2 (261 aa).

Residues 1 to 18 (MWDLVLSIALSVGCTGAV) form the signal peptide. A propeptide spans 19–24 (PLIQSR) (activation peptide). Residues 25–258 (IVGGWECEKH…YRKWIKDTIA (234 aa)) form the Peptidase S1 domain. Intrachain disulfides connect Cys31-Cys173, Cys50-Cys66, Cys152-Cys219, Cys184-Cys198, and Cys209-Cys234. His65 serves as the catalytic Charge relay system. Asn102 is a glycosylation site (N-linked (GlcNAc...) asparagine). Catalysis depends on Asp120, which acts as the Charge relay system. Ser213 functions as the Charge relay system in the catalytic mechanism.

The protein belongs to the peptidase S1 family. Kallikrein subfamily.

The enzyme catalyses Preferential cleavage of Arg-|-Xaa bonds in small molecule substrates. Highly selective action to release kallidin (lysyl-bradykinin) from kininogen involves hydrolysis of Met-|-Xaa or Leu-|-Xaa.. Its function is as follows. Glandular kallikreins cleave Met-Lys and Arg-Ser bonds in kininogen to release Lys-bradykinin. This is Kallikrein-2 (KLK2) from Homo sapiens (Human).